We begin with the raw amino-acid sequence, 151 residues long: MTSISLDSLKPNKGARKRKTRKGRGIAAGQGASCGFGMRGQKSRSGRPTRPGFEGGQMPLYRRVPKLKHFPLVNSKSFTLINVASLNSLKEGSTVNLDSLVKTGIVTSPKYPLKVLGNGNLKVKLVVQAAAFTASAKTKIEGAGGSCEVFE.

The interval 1 to 58 (MTSISLDSLKPNKGARKRKTRKGRGIAAGQGASCGFGMRGQKSRSGRPTRPGFEGGQM) is disordered. Residues 13-24 (KGARKRKTRKGR) show a composition bias toward basic residues. Residues 26 to 38 (IAAGQGASCGFGM) show a composition bias toward gly residues.

Belongs to the universal ribosomal protein uL15 family. As to quaternary structure, part of the 50S ribosomal subunit.

Functionally, binds to the 23S rRNA. This is Large ribosomal subunit protein uL15 from Prochlorococcus marinus (strain SARG / CCMP1375 / SS120).